The primary structure comprises 411 residues: Multidrug resistance protein MdtG (411 aa).

A run of 10 helical transmembrane segments spans residues 14–34 (LFVA…IMPF), 56–76 (LVFS…GGLA), 89–109 (ALGM…WQFL), 113–133 (AVLG…ATQV), 144–164 (TLST…GLLA), 171–191 (PVFY…LLYV), 219–239 (ILSL…IAPI), 254–274 (LAFV…MSAP), 288–308 (ILVF…FVQT), and 376–396 (AVFC…WWCL).

Belongs to the major facilitator superfamily. DHA1 family. MdtG (TC 2.A.1.2.20) subfamily.

The protein localises to the cell inner membrane. The polypeptide is Multidrug resistance protein MdtG (Serratia proteamaculans (strain 568)).